A 98-amino-acid chain; its full sequence is NADH-ubiquinone oxidoreductase chain 4L (98 aa).

The next 3 helical transmembrane spans lie at 1-21, 30-50, and 61-81; these read MSPILINMLLAFTISLIGLLI, LLCLEGMMLSLFILTSTLALT, and IILLVFAACEAAIGLSLLVMV.

The protein belongs to the complex I subunit 4L family. In terms of assembly, core subunit of respiratory chain NADH dehydrogenase (Complex I) which is composed of 45 different subunits.

It localises to the mitochondrion inner membrane. The catalysed reaction is a ubiquinone + NADH + 5 H(+)(in) = a ubiquinol + NAD(+) + 4 H(+)(out). Functionally, core subunit of the mitochondrial membrane respiratory chain NADH dehydrogenase (Complex I) which catalyzes electron transfer from NADH through the respiratory chain, using ubiquinone as an electron acceptor. Part of the enzyme membrane arm which is embedded in the lipid bilayer and involved in proton translocation. This Chrysochloris asiatica (Cape golden mole) protein is NADH-ubiquinone oxidoreductase chain 4L (MT-ND4L).